The following is a 325-amino-acid chain: MNALTAVKANTDDLAQRHTGFTLAPSAQSPRLLALTFTADTTRQFLHQVAQWPVQALEYKSFLRFKIGKILDDLCGNQLQPLLIKTLLNRAQGALLISAEGIDDVAQAEEMVKLATAVAHLIGRSNYDAMSGQYYARFVVKNVDNSDSYLRQPHRVMELHNDGTYVEEVTDYVLMMKIDEQNMEGGNSLLLHLDDWEHLESFFTHPLARRVMRWAAPPSKNVSHDVWHPVFDVDQQGRPVMRYIDQFVQPKDFEEGVWLSELSDALETSQNILSVPVPVGKFLLINNLFWLHGRDRFTPHPDLRRELMRQRGYFAYAASHYQTHQ.

3 residues coordinate Fe cation: His160, Asp162, and His292.

Belongs to the glutarate hydroxylase family. In terms of assembly, homotetramer. The cofactor is Fe(2+).

It catalyses the reaction glutarate + 2-oxoglutarate + O2 = (S)-2-hydroxyglutarate + succinate + CO2. It participates in amino-acid degradation. Acts as an alpha-ketoglutarate-dependent dioxygenase catalyzing hydroxylation of glutarate (GA) to L-2-hydroxyglutarate (L2HG). Functions in a L-lysine degradation pathway that proceeds via cadaverine, glutarate and L-2-hydroxyglutarate. The sequence is that of Glutarate 2-hydroxylase from Salmonella newport (strain SL254).